A 393-amino-acid polypeptide reads, in one-letter code: S-adenosylmethionine synthase (393 aa).

H17 lines the ATP pocket. D19 contacts Mg(2+). E45 is a K(+) binding site. Positions 58 and 106 each coordinate L-methionine. Positions 106-116 (QSAHIAQGVNA) are flexible loop. Residues 171–173 (DAK), 237–238 (KF), D246, 252–253 (RK), A269, and K273 each bind ATP. D246 serves as a coordination point for L-methionine. K277 contributes to the L-methionine binding site.

The protein belongs to the AdoMet synthase family. Homotetramer; dimer of dimers. Mg(2+) is required as a cofactor. It depends on K(+) as a cofactor.

The protein resides in the cytoplasm. It catalyses the reaction L-methionine + ATP + H2O = S-adenosyl-L-methionine + phosphate + diphosphate. Its pathway is amino-acid biosynthesis; S-adenosyl-L-methionine biosynthesis; S-adenosyl-L-methionine from L-methionine: step 1/1. Its function is as follows. Catalyzes the formation of S-adenosylmethionine (AdoMet) from methionine and ATP. The overall synthetic reaction is composed of two sequential steps, AdoMet formation and the subsequent tripolyphosphate hydrolysis which occurs prior to release of AdoMet from the enzyme. The polypeptide is S-adenosylmethionine synthase (Ruegeria pomeroyi (strain ATCC 700808 / DSM 15171 / DSS-3) (Silicibacter pomeroyi)).